The sequence spans 384 residues: Putative pectate lyase 2 (384 aa).

Positions 1–23 are cleaved as a signal peptide; sequence MASLFLTIISLLFAAFSSSVVEA. Ca(2+) contacts are provided by D182, D206, and D210. Residue R262 is part of the active site.

Belongs to the polysaccharide lyase 1 family. The cofactor is Ca(2+).

It carries out the reaction Eliminative cleavage of (1-&gt;4)-alpha-D-galacturonan to give oligosaccharides with 4-deoxy-alpha-D-galact-4-enuronosyl groups at their non-reducing ends.. Its pathway is glycan metabolism; pectin degradation; 2-dehydro-3-deoxy-D-gluconate from pectin: step 2/5. The protein is Putative pectate lyase 2 of Arabidopsis thaliana (Mouse-ear cress).